A 319-amino-acid chain; its full sequence is ATP-dependent 6-phosphofructokinase (319 aa).

An ATP-binding site is contributed by glycine 11. 21–25 (RAVAR) lines the ADP pocket. ATP contacts are provided by residues 72–73 (RY) and 102–105 (GDGS). Aspartate 103 contacts Mg(2+). 125-127 (TID) provides a ligand contact to substrate. Catalysis depends on aspartate 127, which acts as the Proton acceptor. ADP is bound at residue arginine 154. Substrate contacts are provided by residues arginine 162 and 169 to 171 (MGR). ADP is bound by residues 185-187 (GAE) and arginine 211. Substrate-binding positions include glutamate 222, arginine 243, and 249–252 (HIVR).

The protein belongs to the phosphofructokinase type A (PFKA) family. ATP-dependent PFK group I subfamily. Prokaryotic clade 'B1' sub-subfamily. As to quaternary structure, homotetramer. Mg(2+) is required as a cofactor.

It localises to the cytoplasm. It carries out the reaction beta-D-fructose 6-phosphate + ATP = beta-D-fructose 1,6-bisphosphate + ADP + H(+). It participates in carbohydrate degradation; glycolysis; D-glyceraldehyde 3-phosphate and glycerone phosphate from D-glucose: step 3/4. Its activity is regulated as follows. Allosterically activated by ADP and other diphosphonucleosides, and allosterically inhibited by phosphoenolpyruvate. Catalyzes the phosphorylation of D-fructose 6-phosphate to fructose 1,6-bisphosphate by ATP, the first committing step of glycolysis. This is ATP-dependent 6-phosphofructokinase from Lacticaseibacillus casei (strain BL23) (Lactobacillus casei).